The following is a 525-amino-acid chain: Exoglucanase 1 (525 aa).

Positions Met1 to Ala18 are cleaved as a signal peptide. The interval Gln19–Asn467 is catalytic. Glu231 serves as the catalytic Nucleophile. Glu236 functions as the Proton donor in the catalytic mechanism. Residue Asn289 is glycosylated (N-linked (GlcNAc...) asparagine). The disordered stretch occupies residues Gly454 to Gly492. A compositionally biased stretch (gly residues) spans Pro456–Gly465. Residues Pro468–Pro489 are linker. Residues Thr473–Pro489 are compositionally biased toward low complexity. The region spanning Pro489–Leu525 is the CBM1 domain. Cystine bridges form between Cys497/Cys514 and Cys508/Cys524.

This sequence belongs to the glycosyl hydrolase 7 (cellulase C) family.

The enzyme catalyses Hydrolysis of (1-&gt;4)-beta-D-glucosidic linkages in cellulose and cellotetraose, releasing cellobiose from the non-reducing ends of the chains.. The biological conversion of cellulose to glucose generally requires three types of hydrolytic enzymes: (1) Endoglucanases which cut internal beta-1,4-glucosidic bonds; (2) Exocellobiohydrolases that cut the disaccharide cellobiose from the non-reducing end of the cellulose polymer chain; (3) Beta-1,4-glucosidases which hydrolyze the cellobiose and other short cello-oligosaccharides to glucose. The polypeptide is Exoglucanase 1 (CBH-1) (Humicola insolens (Soft-rot fungus)).